Consider the following 657-residue polypeptide: DNA mismatch repair protein MutL (657 aa).

Belongs to the DNA mismatch repair MutL/HexB family.

In terms of biological role, this protein is involved in the repair of mismatches in DNA. It is required for dam-dependent methyl-directed DNA mismatch repair. May act as a 'molecular matchmaker', a protein that promotes the formation of a stable complex between two or more DNA-binding proteins in an ATP-dependent manner without itself being part of a final effector complex. The chain is DNA mismatch repair protein MutL from Streptococcus agalactiae serotype Ia (strain ATCC 27591 / A909 / CDC SS700).